The primary structure comprises 478 residues: uncharacterized protein (478 aa).

Positions 1–19 (MKLFPLCLSALVMSTATCA) are cleaved as a signal peptide. The Lumenal segment spans residues 20 to 214 (SSVEGAIEKV…VPVTLKLQRQ (195 aa)). The helical transmembrane segment at 215-235 (IFLSFSIVYGLISLWWAIRCI) threads the bilayer. At 236 to 240 (CSRTK) the chain is on the cytoplasmic side. The chain crosses the membrane as a helical span at residues 241 to 261 (LHLVQVCLFCWFSFFILNHPV). Over 262–289 (KQRIFSIDNPDEYLVPFVVSCFTYFLGD) the chain is Lumenal. Residues 290 to 310 (GIEYALYSLFITTTVLGFGTI) traverse the membrane as a helical segment. Over 311–317 (RRTSKKM) the chain is Cytoplasmic. The chain crosses the membrane as a helical span at residues 318 to 338 (VLFFSLLTCGQAFLVNVAPMV). Residues 339 to 356 (YPLLYISGSDKACVLRMV) are Lumenal-facing. A helical membrane pass occupies residues 357–377 (WVFNKFLYLPLITFLGAVLAF). The Cytoplasmic segment spans residues 378-391 (RFRLKKASQFDTRW). A helical membrane pass occupies residues 392–412 (NLFALTLAIIILFAFNDLVIF). Over 413–427 (DKLQKLWKYDDTTLE) the chain is Lumenal. Residues 428-448 (YLKIVNGGIKFVAFSILLGPY) form a helical membrane-spanning segment. Residues 449 to 478 (SKLFAEPKSLQLDDFLGKHDGHKDPSLEKF) lie on the Cytoplasmic side of the membrane.

It localises to the endoplasmic reticulum membrane. Its subcellular location is the golgi apparatus membrane. This is an uncharacterized protein from Schizosaccharomyces pombe (strain 972 / ATCC 24843) (Fission yeast).